Here is a 99-residue protein sequence, read N- to C-terminus: Malonate decarboxylase acyl carrier protein (99 aa).

Serine 25 carries the O-(phosphoribosyl dephospho-coenzyme A)serine modification.

The protein belongs to the MdcC family. In terms of processing, covalently binds the prosthetic group of malonate decarboxylase.

It localises to the cytoplasm. Its function is as follows. Subunit of malonate decarboxylase, it is an acyl carrier protein to which acetyl and malonyl thioester residues are bound via a 2'-(5''-phosphoribosyl)-3'-dephospho-CoA prosthetic group and turn over during the catalytic mechanism. The protein is Malonate decarboxylase acyl carrier protein of Pseudomonas fluorescens (strain ATCC BAA-477 / NRRL B-23932 / Pf-5).